The following is a 371-amino-acid chain: tRNA-specific 2-thiouridylase MnmA (371 aa).

ATP-binding positions include 12–19 (GMSGGVDS) and Met38. The tract at residues 98 to 100 (NPD) is interaction with target base in tRNA. Residue Cys103 is the Nucleophile of the active site. The cysteines at positions 103 and 200 are disulfide-linked. Gly127 provides a ligand contact to ATP. The tract at residues 150–152 (KDQ) is interaction with tRNA. The active-site Cysteine persulfide intermediate is the Cys200. The interaction with tRNA stretch occupies residues 308 to 309 (RY).

This sequence belongs to the MnmA/TRMU family.

It is found in the cytoplasm. The catalysed reaction is S-sulfanyl-L-cysteinyl-[protein] + uridine(34) in tRNA + AH2 + ATP = 2-thiouridine(34) in tRNA + L-cysteinyl-[protein] + A + AMP + diphosphate + H(+). In terms of biological role, catalyzes the 2-thiolation of uridine at the wobble position (U34) of tRNA, leading to the formation of s(2)U34. The protein is tRNA-specific 2-thiouridylase MnmA of Oceanobacillus iheyensis (strain DSM 14371 / CIP 107618 / JCM 11309 / KCTC 3954 / HTE831).